A 199-amino-acid polypeptide reads, in one-letter code: Casparian strip membrane protein 2 (199 aa).

The Cytoplasmic segment spans residues Met-1 to Gly-37. Residues Ile-38–Ala-58 traverse the membrane as a helical segment. The Extracellular portion of the chain corresponds to Ser-59–Gln-87. A helical transmembrane segment spans residues Phe-88–Ile-108. Topologically, residues Val-109–Arg-120 are cytoplasmic. A helical membrane pass occupies residues Leu-121–Ala-141. Residues Ala-142 to Gly-173 are Extracellular-facing. N-linked (GlcNAc...) asparagine glycosylation is present at Asn-152. Residues Ala-174 to Phe-194 form a helical membrane-spanning segment. Residues Ala-195–His-199 lie on the Cytoplasmic side of the membrane.

This sequence belongs to the Casparian strip membrane proteins (CASP) family. In terms of assembly, homodimer and heterodimers.

Its subcellular location is the cell membrane. In terms of biological role, regulates membrane-cell wall junctions and localized cell wall deposition. Required for establishment of the Casparian strip membrane domain (CSD) and the subsequent formation of Casparian strips, a cell wall modification of the root endodermis that determines an apoplastic barrier between the intraorganismal apoplasm and the extraorganismal apoplasm and prevents lateral diffusion. In Populus trichocarpa (Western balsam poplar), this protein is Casparian strip membrane protein 2.